A 376-amino-acid chain; its full sequence is Chaperone protein DnaJ (376 aa).

The region spanning 5–72 (DFYEVLGVPK…QKRAAYDQYG (68 aa)) is the J domain. A CR-type zinc finger spans residues 136-214 (GKEAQIRIPS…CHGQGRVKKQ (79 aa)). Residues Cys-149, Cys-152, Cys-166, Cys-169, Cys-188, Cys-191, Cys-202, and Cys-205 each contribute to the Zn(2+) site. CXXCXGXG motif repeat units follow at residues 149-156 (CETCHGSG), 166-173 (CGTCQGSG), 188-195 (CPHCRGTG), and 202-209 (CTACHGQG). 2 disordered regions span residues 227–246 (DGMR…GGPP) and 352–376 (SLKK…SFFS). Residues 237–246 (GEPGTNGGPP) show a composition bias toward gly residues. Residues 367-376 (WTDRLKSFFS) show a composition bias toward basic and acidic residues.

It belongs to the DnaJ family. As to quaternary structure, homodimer. Zn(2+) serves as cofactor.

Its subcellular location is the cytoplasm. In terms of biological role, participates actively in the response to hyperosmotic and heat shock by preventing the aggregation of stress-denatured proteins and by disaggregating proteins, also in an autonomous, DnaK-independent fashion. Unfolded proteins bind initially to DnaJ; upon interaction with the DnaJ-bound protein, DnaK hydrolyzes its bound ATP, resulting in the formation of a stable complex. GrpE releases ADP from DnaK; ATP binding to DnaK triggers the release of the substrate protein, thus completing the reaction cycle. Several rounds of ATP-dependent interactions between DnaJ, DnaK and GrpE are required for fully efficient folding. Also involved, together with DnaK and GrpE, in the DNA replication of plasmids through activation of initiation proteins. The protein is Chaperone protein DnaJ of Acidovorax sp. (strain JS42).